Reading from the N-terminus, the 694-residue chain is ATP-binding cassette sub-family G member 8 (694 aa).

The Cytoplasmic portion of the chain corresponds to 1 to 437 (MAEKTKEETQ…ISNDFRDLPT (437 aa)). One can recognise an ABC transporter domain in the interval 91-335 (AQFKLPWRSR…FTSIGYPCPR (245 aa)). The ABC transmembrane type-2 domain maps to 436–684 (PTLFIHGAEA…FLSLYYLSLK (249 aa)). A helical transmembrane segment spans residues 438-458 (LFIHGAEACLMSLIIGFLYYG). Residues 459–468 (HADKPLSFMD) are Extracellular-facing. A helical membrane pass occupies residues 469 to 489 (MAALLFMIGALIPFNVILDVV). Over 490–518 (SKCHSERSLLYYELEDGLYTAGPYFFAKV) the chain is Cytoplasmic. A helical transmembrane segment spans residues 519-539 (LGELPEHCAYVIIYGMPIYWL). Over 540–548 (TNLRPGPEL) the chain is Extracellular. A helical transmembrane segment spans residues 549–569 (FLLHFMLLWLVVFCCRTMALA). Residues 570 to 576 (ASAMLPT) are Cytoplasmic-facing. Residues 577–597 (FHMSSFCCNALYNSFYLTAGF) traverse the membrane as a helical segment. The Extracellular portion of the chain corresponds to 598–660 (MINLNNLWIV…VTAMDLNSHP (63 aa)). The N-linked (GlcNAc...) asparagine glycan is linked to Asn640. A helical transmembrane segment spans residues 661-681 (LYAIYLIVIGISCGFLSLYYL). Residues 682-694 (SLKFIKQKSIQDW) lie on the Cytoplasmic side of the membrane.

Belongs to the ABC transporter superfamily. ABCG family. Eye pigment precursor importer (TC 3.A.1.204) subfamily. As to quaternary structure, heterodimer with ABCG8. Mg(2+) serves as cofactor. In terms of processing, N-glycosylated. N-glycosylation is important for efficient export out of the endoplasmic reticulum. Highest expression in liver, with lower levels in small intestine and colon.

It localises to the cell membrane. The protein resides in the apical cell membrane. It catalyses the reaction cholesterol(in) + ATP + H2O = cholesterol(out) + ADP + phosphate + H(+). The catalysed reaction is sitosterol(in) + ATP + H2O = sitosterol(out) + ADP + phosphate + H(+). In terms of biological role, ABCG5 and ABCG8 form an obligate heterodimer that mediates Mg(2+)- and ATP-dependent sterol transport across the cell membrane. Plays an essential role in the selective transport of the dietary cholesterol in and out of the enterocytes and in the selective sterol excretion by the liver into bile. Required for normal sterol homeostasis. The heterodimer with ABCG5 has ATPase activity. This chain is ATP-binding cassette sub-family G member 8, found in Rattus norvegicus (Rat).